Reading from the N-terminus, the 142-residue chain is Inner membrane protein YqaA (142 aa).

Over 1–2 the chain is Cytoplasmic; it reads MS. Residues 3–23 form a helical membrane-spanning segment; it reads EALSLFSLFASSFLSATLLPG. Topologically, residues 24–26 are periplasmic; it reads NSE. Residues 27 to 47 traverse the membrane as a helical segment; the sequence is VVLVAMLLSGISHPWVLVLTA. Residues 48–86 are Cytoplasmic-facing; it reads TMGNSLGGLTNVILGRFFPLRKTSRWQEKATGWLKRYGA. The helical transmembrane segment at 87–107 threads the bilayer; it reads VTLLLSWMPVVGDLLCLLAGW. Residues 108 to 142 are Periplasmic-facing; the sequence is MRISWGPVIFFLCLGKALRYVAVAAATVQGMMWWH.

The protein to H.influenzae HI_0489.

The protein localises to the cell inner membrane. The sequence is that of Inner membrane protein YqaA (yqaA) from Escherichia coli (strain K12).